A 184-amino-acid polypeptide reads, in one-letter code: MGLDKFKDKNRDELSMIEVARAILEDNGKRMAFADIVNAVQKYLNKSDEEIRERLPQFYTDMNTDGEFISMGENVWALRSWFPYESVDEEVNHPEDEEEDDSRKHHKKVNAFLASATGDDDIIDYDNDDPEDDDLDAATDDSDDDYSDDDSDYDEDNDDADDVLPDGIEGQLSQLNDEDDDEDD.

In terms of domain architecture, HTH HARE-type spans 14-81 (LSMIEVARAI…GENVWALRSW (68 aa)). Disordered stretches follow at residues 88-107 (DEEV…KHHK) and 118-184 (GDDD…DEDD). The segment covering 118 to 164 (GDDDIIDYDNDDPEDDDLDAATDDSDDDYSDDDSDYDEDNDDADDVL) has biased composition (acidic residues).

This sequence belongs to the RpoE family. RNAP is composed of a core of 2 alpha, a beta and a beta' subunits. The core is associated with a delta subunit and one of several sigma factors.

Participates in both the initiation and recycling phases of transcription. In the presence of the delta subunit, RNAP displays an increased specificity of transcription, a decreased affinity for nucleic acids, and an increased efficiency of RNA synthesis because of enhanced recycling. The polypeptide is Probable DNA-directed RNA polymerase subunit delta (Lactobacillus acidophilus (strain ATCC 700396 / NCK56 / N2 / NCFM)).